Reading from the N-terminus, the 332-residue chain is Ketol-acid reductoisomerase (NADP(+)) (332 aa).

A KARI N-terminal Rossmann domain is found at A2 to T182. NADP(+) contacts are provided by residues Y25–Q28, S51, S53, and D83–Q86. The active site involves H108. Position 134 (G134) interacts with NADP(+). Positions T183–L327 constitute a KARI C-terminal knotted domain. Mg(2+)-binding residues include D191, E195, E227, and E231. Residue S252 participates in substrate binding.

It belongs to the ketol-acid reductoisomerase family. The cofactor is Mg(2+).

The enzyme catalyses (2R)-2,3-dihydroxy-3-methylbutanoate + NADP(+) = (2S)-2-acetolactate + NADPH + H(+). It catalyses the reaction (2R,3R)-2,3-dihydroxy-3-methylpentanoate + NADP(+) = (S)-2-ethyl-2-hydroxy-3-oxobutanoate + NADPH + H(+). It functions in the pathway amino-acid biosynthesis; L-isoleucine biosynthesis; L-isoleucine from 2-oxobutanoate: step 2/4. It participates in amino-acid biosynthesis; L-valine biosynthesis; L-valine from pyruvate: step 2/4. In terms of biological role, involved in the biosynthesis of branched-chain amino acids (BCAA). Catalyzes an alkyl-migration followed by a ketol-acid reduction of (S)-2-acetolactate (S2AL) to yield (R)-2,3-dihydroxy-isovalerate. In the isomerase reaction, S2AL is rearranged via a Mg-dependent methyl migration to produce 3-hydroxy-3-methyl-2-ketobutyrate (HMKB). In the reductase reaction, this 2-ketoacid undergoes a metal-dependent reduction by NADPH to yield (R)-2,3-dihydroxy-isovalerate. This Persephonella marina (strain DSM 14350 / EX-H1) protein is Ketol-acid reductoisomerase (NADP(+)).